The primary structure comprises 242 residues: Outer membrane protein class 4 (242 aa).

Positions 1–22 (MTKQLKLSALFVALLASGTAVA) are cleaved as a signal peptide. 7 repeat units span residues 69-70 (AP), 71-72 (EP), 73-74 (EP), 75-76 (EP), 77-78 (EP), 79-80 (AP), and 81-82 (AP). Residues 69–82 (APEPEPEPEPAPAP) are 7 X 2 AA tandem repeats of X-P. In terms of domain architecture, OmpA-like spans 92 to 229 (YVDETISLSA…RVDVKIRSIV (138 aa)). Cysteine 191 and cysteine 214 are disulfide-bonded.

It belongs to the outer membrane OOP (TC 1.B.6) superfamily. In terms of assembly, the C-terminus exists in a monomer-dimer equilibrium.

It localises to the cell outer membrane. This is Outer membrane protein class 4 from Neisseria meningitidis serogroup B (strain ATCC BAA-335 / MC58).